Here is a 221-residue protein sequence, read N- to C-terminus: MFPFLKQRSRSVHGEDAPSSTESTVSVAAADIGGACTTLTVWRKSLLVSCEGFTVIDSNGDLIYRVDNYARTRPEELILMDKDGNSLLLMHRTKKITLVDSWGIYEANDTKGETKIPKCPTWYMRKNLKMNILSTKSDILAYVYSGSFDKKNSYIIKGSYRCKSCKIVHVPLNKTVVEIKRKEVRTKGVRFGSDVFDLVVNPGFDTGLAMALVLLLDQMFS.

The disordered stretch occupies residues 1 to 20 (MFPFLKQRSRSVHGEDAPSS).

This sequence belongs to the LOR family.

In terms of biological role, might be related to the phospholipid scramblase and tubby-like superfamily of membrane tethered transcription factors. The polypeptide is Protein LURP-one-related 17 (Arabidopsis thaliana (Mouse-ear cress)).